The sequence spans 157 residues: Arginine repressor (157 aa).

This sequence belongs to the ArgR family.

It is found in the cytoplasm. Its pathway is amino-acid biosynthesis; L-arginine biosynthesis [regulation]. Regulates arginine biosynthesis genes. The chain is Arginine repressor from Bacteroides fragilis (strain YCH46).